A 473-amino-acid chain; its full sequence is ATP synthase subunit beta (473 aa).

153 to 160 is a binding site for ATP; sequence GGAGVGKT.

Belongs to the ATPase alpha/beta chains family. In terms of assembly, F-type ATPases have 2 components, CF(1) - the catalytic core - and CF(0) - the membrane proton channel. CF(1) has five subunits: alpha(3), beta(3), gamma(1), delta(1), epsilon(1). CF(0) has three main subunits: a(1), b(2) and c(9-12). The alpha and beta chains form an alternating ring which encloses part of the gamma chain. CF(1) is attached to CF(0) by a central stalk formed by the gamma and epsilon chains, while a peripheral stalk is formed by the delta and b chains.

Its subcellular location is the cell inner membrane. It carries out the reaction ATP + H2O + 4 H(+)(in) = ADP + phosphate + 5 H(+)(out). In terms of biological role, produces ATP from ADP in the presence of a proton gradient across the membrane. The catalytic sites are hosted primarily by the beta subunits. This Rickettsia akari (strain Hartford) protein is ATP synthase subunit beta.